Consider the following 256-residue polypeptide: Cell division protein FtsQ (256 aa).

Residues 1-23 (MIKAVKMNTSFDKEKVRKHLPGA) lie on the Cytoplasmic side of the membrane. The chain crosses the membrane as a helical span at residues 24–44 (IFLSLVVITSLWLVISTISWM). Residues 45-256 (TDEDRLPLSH…SDDVENKEEN (212 aa)) are Periplasmic-facing. The POTRA domain maps to 50 to 120 (LPLSHMIIQG…ETIKVFVVEH (71 aa)).

The protein belongs to the FtsQ/DivIB family. FtsQ subfamily. In terms of assembly, part of a complex composed of FtsB, FtsL and FtsQ.

It localises to the cell inner membrane. Essential cell division protein. May link together the upstream cell division proteins, which are predominantly cytoplasmic, with the downstream cell division proteins, which are predominantly periplasmic. May control correct divisome assembly. The polypeptide is Cell division protein FtsQ (Aliivibrio fischeri (strain ATCC 700601 / ES114) (Vibrio fischeri)).